A 206-amino-acid chain; its full sequence is GTP cyclohydrolase 1 (206 aa).

Zn(2+)-binding residues include cysteine 95, histidine 98, and cysteine 166.

The protein belongs to the GTP cyclohydrolase I family. As to quaternary structure, toroid-shaped homodecamer, composed of two pentamers of five dimers.

It catalyses the reaction GTP + H2O = 7,8-dihydroneopterin 3'-triphosphate + formate + H(+). It functions in the pathway cofactor biosynthesis; 7,8-dihydroneopterin triphosphate biosynthesis; 7,8-dihydroneopterin triphosphate from GTP: step 1/1. The chain is GTP cyclohydrolase 1 from Bartonella quintana (strain Toulouse) (Rochalimaea quintana).